Reading from the N-terminus, the 625-residue chain is Probable receptor-like protein kinase At1g11050 (625 aa).

An N-terminal signal peptide occupies residues 1 to 20; the sequence is MPNSILFLLLSFLYLTNCVA. Topologically, residues 21 to 227 are extracellular; the sequence is QSPSQTCPLD…PLNSKKKRHT (207 aa). N-linked (GlcNAc...) asparagine glycans are attached at residues Asn40, Asn106, Asn121, and Asn177. The helical transmembrane segment at 228 to 248 threads the bilayer; that stretch reads VALALGITGAIFGALVIAGLI. The Cytoplasmic segment spans residues 249-625; that stretch reads CLYFRFGKAV…LQIHSGDMLR (377 aa). A Protein kinase domain is found at 295–555; it reads FSQKNFIGRG…NPKGIMERFL (261 aa). ATP-binding positions include 301-309 and Lys323; that span reads IGRGGFGFV. Asp426 serves as the catalytic Proton acceptor.

Belongs to the protein kinase superfamily. Ser/Thr protein kinase family.

It localises to the membrane. It carries out the reaction L-seryl-[protein] + ATP = O-phospho-L-seryl-[protein] + ADP + H(+). The enzyme catalyses L-threonyl-[protein] + ATP = O-phospho-L-threonyl-[protein] + ADP + H(+). This is Probable receptor-like protein kinase At1g11050 from Arabidopsis thaliana (Mouse-ear cress).